A 117-amino-acid polypeptide reads, in one-letter code: Large ribosomal subunit protein bL19 (117 aa).

This sequence belongs to the bacterial ribosomal protein bL19 family.

In terms of biological role, this protein is located at the 30S-50S ribosomal subunit interface and may play a role in the structure and function of the aminoacyl-tRNA binding site. This chain is Large ribosomal subunit protein bL19, found in Christiangramia forsetii (strain DSM 17595 / CGMCC 1.15422 / KT0803) (Gramella forsetii).